The following is a 446-amino-acid chain: O-antigen polymerase (446 aa).

11 helical membrane passes run 11 to 31, 33 to 53, 58 to 78, 104 to 124, 147 to 167, 186 to 206, 211 to 231, 252 to 272, 355 to 375, 391 to 411, and 415 to 435; these read ICSYTFFMVNLFILILSVINE, FCEIAYVIISVSSVLFCVIII, QGGFLNPMTFCIISVFFFILI, IYVFYSLAVVNIPLAFTVLLY, QLSMILLWGGLFSAIFLIKSY, LYDELFWFTLSKYCYILSLLF, NFILYSLLIFITSIGYILVGL, LKIKWLLLVAILVTTISSLFL, IYLGWIIGSVALLLFAFSLAF, KLAYTYRLIIFLALPNLIYFA, and LFDFITKVLFIALFIGGLSIV.

The protein localises to the cell inner membrane. The catalysed reaction is n lipid-linked O-antigen repeat units = a lipid-linked O antigen + (n-1) polyisoprenyl diphosphate.. Its pathway is bacterial outer membrane biogenesis; LPS O-antigen biosynthesis. Its function is as follows. Polymerase involved in the biosynthesis of the lipopolysaccharide (LPS). Catalyzes the polymerization of the O-antigen repeat units on the periplasmic face of the inner membrane, leading to the formation of the lipid-linked O-antigen molecule. In vitro, shows a preference for bacteria-based, undecaprenyl-containing substrates rather than eukaryote-based, dolichol-containing substrates. The sequence is that of O-antigen polymerase from Escherichia coli.